The chain runs to 291 residues: B3 domain-containing protein At2g16210 (291 aa).

A DNA-binding region (TF-B3 1) is located at residues 19-114; that stretch reads FFKVVQSINV…HFTVNIFKLD (96 aa). The span at 149-159 shows a compositional bias: polar residues; it reads VSSNRGQTTAA. The segment at 149–182 is disordered; the sequence is VSSNRGQTTAAESKGRKLNLGKRAAKESQSSKRT. The span at 172–182 shows a compositional bias: basic and acidic residues; sequence AAKESQSSKRT. The TF-B3 2 DNA-binding region spans 200 to 291; it reads AAAFTILFKQ…KELLLVVSKP (92 aa).

Its subcellular location is the nucleus. The polypeptide is B3 domain-containing protein At2g16210 (Arabidopsis thaliana (Mouse-ear cress)).